The primary structure comprises 159 residues: Large ribosomal subunit protein uL23m (159 aa).

Belongs to the universal ribosomal protein uL23 family. Component of the mitochondrial ribosome large subunit (39S) which comprises a 16S rRNA and about 50 distinct proteins.

It localises to the mitochondrion. The sequence is that of Large ribosomal subunit protein uL23m (mrpl-23) from Caenorhabditis briggsae.